The following is a 121-amino-acid chain: Large ribosomal subunit protein uL14 (121 aa).

The protein belongs to the universal ribosomal protein uL14 family. As to quaternary structure, part of the 50S ribosomal subunit. Forms a cluster with proteins L3 and L19. In the 70S ribosome, L14 and L19 interact and together make contacts with the 16S rRNA in bridges B5 and B8.

Its function is as follows. Binds to 23S rRNA. Forms part of two intersubunit bridges in the 70S ribosome. The sequence is that of Large ribosomal subunit protein uL14 from Akkermansia muciniphila (strain ATCC BAA-835 / DSM 22959 / JCM 33894 / BCRC 81048 / CCUG 64013 / CIP 107961 / Muc).